Consider the following 238-residue polypeptide: Proteasome subunit beta type-6 (238 aa).

N-acetylalanine is present on Ala2. The propeptide at 2-33 (AAALAVRGAVSAPAFGPEALTPDWENREVSTG) is removed in mature form. The Nucleophile role is filled by Thr34. Phosphothreonine is present on Thr68.

The protein belongs to the peptidase T1B family. As to quaternary structure, the 26S proteasome consists of a 20S proteasome core and two 19S regulatory subunits. The 20S proteasome core is a barrel-shaped complex made of 28 subunits that are arranged in four stacked rings. The two outer rings are each formed by seven alpha subunits, and the two inner rings are formed by seven beta subunits. The proteolytic activity is exerted by three beta-subunits PSMB5, PSMB6 and PSMB7.

It is found in the cytoplasm. The protein localises to the nucleus. The catalysed reaction is Cleavage of peptide bonds with very broad specificity.. In terms of biological role, component of the 20S core proteasome complex involved in the proteolytic degradation of most intracellular proteins. This complex plays numerous essential roles within the cell by associating with different regulatory particles. Associated with two 19S regulatory particles, forms the 26S proteasome and thus participates in the ATP-dependent degradation of ubiquitinated proteins. The 26S proteasome plays a key role in the maintenance of protein homeostasis by removing misfolded or damaged proteins that could impair cellular functions, and by removing proteins whose functions are no longer required. Associated with the PA200 or PA28, the 20S proteasome mediates ubiquitin-independent protein degradation. This type of proteolysis is required in several pathways including spermatogenesis (20S-PA200 complex) or generation of a subset of MHC class I-presented antigenic peptides (20S-PA28 complex). Within the 20S core complex, PSMB6 displays a peptidylglutamyl-hydrolyzing activity also termed postacidic or caspase-like activity, meaning that the peptides bond hydrolysis occurs directly after acidic residues. The chain is Proteasome subunit beta type-6 (Psmb6) from Rattus norvegicus (Rat).